A 64-amino-acid polypeptide reads, in one-letter code: DNA-directed RNA polymerase subunit Rpo10 (64 aa).

Zn(2+)-binding residues include cysteine 7, cysteine 10, cysteine 45, and cysteine 46.

The protein belongs to the archaeal Rpo10/eukaryotic RPB10 RNA polymerase subunit family. In terms of assembly, part of the RNA polymerase complex. The cofactor is Zn(2+).

Its subcellular location is the cytoplasm. It catalyses the reaction RNA(n) + a ribonucleoside 5'-triphosphate = RNA(n+1) + diphosphate. Its function is as follows. DNA-dependent RNA polymerase (RNAP) catalyzes the transcription of DNA into RNA using the four ribonucleoside triphosphates as substrates. The protein is DNA-directed RNA polymerase subunit Rpo10 of Haloquadratum walsbyi (strain DSM 16790 / HBSQ001).